We begin with the raw amino-acid sequence, 637 residues long: DEAD-box ATP-dependent RNA helicase 37 (637 aa).

Disordered stretches follow at residues 1–68 (MRSS…QPSA) and 86–141 (GPAS…EEAT). 2 stretches are compositionally biased toward low complexity: residues 10 to 28 (ANAE…PVAN) and 46 to 68 (GQAP…QPSA). Residues 104 to 116 (GGRGGGGGGGGGW) show a composition bias toward gly residues. The Q motif motif lies at 174-202 (NTFAEIDLGDALNENIRRCKYVKPTPVQR). Positions 205–389 (IPISIAGRDL…SDFLADYIFL (185 aa)) constitute a Helicase ATP-binding domain. 218 to 225 (AQTGSGKT) serves as a coordination point for ATP. A DEAD box motif is present at residues 333–336 (DEAD). A Helicase C-terminal domain is found at 416-567 (YLMDLLHAQK…EVPQWLERYS (152 aa)). The segment at 570–610 (SSFGGGGGRNRRSGGARFGGRDFRRDNRGGGGGGYGGGGGG) is disordered. Residues 588 to 597 (GGRDFRRDNR) show a composition bias toward basic and acidic residues. Positions 598-610 (GGGGGGYGGGGGG) are enriched in gly residues.

Belongs to the DEAD box helicase family. DDX3/DED1 subfamily.

The enzyme catalyses ATP + H2O = ADP + phosphate + H(+). This Oryza sativa subsp. japonica (Rice) protein is DEAD-box ATP-dependent RNA helicase 37 (PL10A).